A 124-amino-acid polypeptide reads, in one-letter code: MAAAMTFCRLLNRCGEAARSLPLGARCFGVRVSPTGEKVTHTGQVYDDKDYRRIRFVGRQKEVNENFAIDLIAEQPVSEVETRVIACDGGGGALGHPKVYINLDKETKTGTCGYCGLQFRQHHH.

The transit peptide at 1–28 (MAAAMTFCRLLNRCGEAARSLPLGARCF) directs the protein to the mitochondrion. K98 is subject to N6-acetyllysine.

The protein belongs to the complex I NDUFS6 subunit family. As to quaternary structure, mammalian complex I is composed of 45 different subunits. This is a component of the iron-sulfur (IP) fragment of the enzyme.

The protein localises to the mitochondrion inner membrane. Functionally, accessory subunit of the mitochondrial membrane respiratory chain NADH dehydrogenase (Complex I), that is believed not to be involved in catalysis. Complex I functions in the transfer of electrons from NADH to the respiratory chain. The immediate electron acceptor for the enzyme is believed to be ubiquinone. The sequence is that of NADH dehydrogenase [ubiquinone] iron-sulfur protein 6, mitochondrial (NDUFS6) from Homo sapiens (Human).